Reading from the N-terminus, the 267-residue chain is Eukaryotic translation initiation factor 3 subunit J (267 aa).

The disordered stretch occupies residues Met-1–Val-70. Residues Trp-24 to Glu-38 are compositionally biased toward acidic residues. Positions Thr-39–Ser-66 are enriched in basic and acidic residues. Positions Ile-192 to Lys-220 form a coiled coil.

It belongs to the eIF-3 subunit J family. As to quaternary structure, component of the eukaryotic translation initiation factor 3 (eIF-3) complex.

The protein localises to the cytoplasm. In terms of biological role, component of the eukaryotic translation initiation factor 3 (eIF-3) complex, which is involved in protein synthesis of a specialized repertoire of mRNAs and, together with other initiation factors, stimulates binding of mRNA and methionyl-tRNAi to the 40S ribosome. The eIF-3 complex specifically targets and initiates translation of a subset of mRNAs involved in cell proliferation. The sequence is that of Eukaryotic translation initiation factor 3 subunit J from Vanderwaltozyma polyspora (strain ATCC 22028 / DSM 70294 / BCRC 21397 / CBS 2163 / NBRC 10782 / NRRL Y-8283 / UCD 57-17) (Kluyveromyces polysporus).